Consider the following 204-residue polypeptide: Thymidylate kinase (204 aa).

Residue 11–18 (GLDKSGKT) coordinates ATP.

It belongs to the thymidylate kinase family.

It catalyses the reaction dTMP + ATP = dTDP + ADP. Its pathway is pyrimidine metabolism; dTTP biosynthesis. This chain is Thymidylate kinase (TMK), found in Bos taurus (Bovine).